Here is a 1012-residue protein sequence, read N- to C-terminus: Isoleucine--tRNA ligase, mitochondrial (1012 aa).

The transit peptide at 1–48 directs the protein to the mitochondrion; it reads MHWGLCPRGPGAAAVAAAGSFWGPARLPSRLGCLGMTRRLVVRSVAGA. Lys-56 is subject to N6-succinyllysine. At Lys-74 the chain carries N6-acetyllysine; alternate. The residue at position 74 (Lys-74) is an N6-succinyllysine; alternate. The 'HIGH' region motif lies at 116–126; it reads PYANGDPHVGH. Lys-194 is subject to N6-succinyllysine. Lys-233 is subject to N6-acetyllysine. N6-acetyllysine; alternate is present on Lys-241. At Lys-241 the chain carries N6-succinyllysine; alternate. An N6-succinyllysine mark is found at Lys-479 and Lys-500. ATP-binding residues include Lys-664 and Lys-667. A 'KMSKS' region motif is present at residues 664 to 668; sequence KMSKS. At Lys-725 the chain carries N6-acetyllysine. An N6-acetyllysine; alternate mark is found at Lys-775 and Lys-781. An N6-succinyllysine; alternate mark is found at Lys-775 and Lys-781.

The protein belongs to the class-I aminoacyl-tRNA synthetase family.

It is found in the mitochondrion matrix. It carries out the reaction tRNA(Ile) + L-isoleucine + ATP = L-isoleucyl-tRNA(Ile) + AMP + diphosphate. Its function is as follows. Aminoacyl-tRNA synthetase that catalyzes the specific attachment of isoleucine to its cognate tRNA (tRNA(Ile)). The sequence is that of Isoleucine--tRNA ligase, mitochondrial from Mus musculus (Mouse).